The sequence spans 180 residues: MKRAILLLPLGIFLIVAVFLFRGLWLDPSELPSALIGKPFPAFDLPSVQDPARRLTEADLKGKPALVNVWGTWCPSCRVEHPELTRLAEQGVVIYGINYKDDNAAAIKWLNELHNPYLLSISDADGTLGLDLGVYGAPETYLIDKQGIIRHKIVGVVDQKVWREQLAPLYQQLLDEPEAR.

The Cytoplasmic portion of the chain corresponds to 1 to 4 (MKRA). A helical membrane pass occupies residues 5-25 (ILLLPLGIFLIVAVFLFRGLW). The Periplasmic portion of the chain corresponds to 26–180 (LDPSELPSAL…QQLLDEPEAR (155 aa)). Residues 34 to 175 (ALIGKPFPAF…LAPLYQQLLD (142 aa)) enclose the Thioredoxin domain. A disulfide bond links Cys74 and Cys77.

It belongs to the thioredoxin family. DsbE subfamily.

The protein localises to the cell inner membrane. In terms of biological role, involved in disulfide bond formation. Catalyzes a late, reductive step in the assembly of periplasmic c-type cytochromes, probably the reduction of disulfide bonds of the apocytochrome c to allow covalent linkage with the heme. Possible subunit of a heme lyase. The sequence is that of Thiol:disulfide interchange protein DsbE (dsbE) from Pseudomonas aeruginosa (strain ATCC 15692 / DSM 22644 / CIP 104116 / JCM 14847 / LMG 12228 / 1C / PRS 101 / PAO1).